Here is a 572-residue protein sequence, read N- to C-terminus: Na(+)/citrate cotransporter (572 aa).

The next 8 helical transmembrane spans lie at 13–33, 53–73, 80–100, 124–144, 218–238, 255–275, 315–335, and 357–377; these read SFAI…LIPD, VIPV…LKVL, IQYM…AVAV, LMLG…NTAA, SASI…VLLG, SWFG…WLWL, SLSY…ILWF, and HITD…IPSQ. N382 carries N-linked (GlcNAc...) asparagine glycosylation. 4 helical membrane passes run 410–430, 443–463, 491–511, and 532–552; these read VPWD…GCET, PLRL…VAMT, PLYV…LPVA, and TGLI…NTWG. An N-linked (GlcNAc...) asparagine glycan is attached at N566.

This sequence belongs to the SLC13A/DASS transporter (TC 2.A.47) family. NADC subfamily. In terms of assembly, homodimer.

It is found in the cell membrane. The catalysed reaction is citrate(out) + 4 Na(+)(out) = citrate(in) + 4 Na(+)(in). With respect to regulation, inhibited by Li(+). Functionally, high-affinity sodium/citrate cotransporter that mediates citrate entry into cells, which is a critical participant of biochemical pathways. May function in various metabolic processes in which citrate has a critical role such as energy production (Krebs cycle), fatty acid synthesis, cholesterol synthesis, glycolysis, and gluconeogenesis. Transports citrate into the cell in a Na(+)-dependent manner, recognizing the trivalent form of citrate (physiological pH) rather than the divalent form. Can recognizes succinate as a substrate, but its affinity for succinate is several fold lower than for citrate. The stoichiometry is probably 4 Na(+) for each carboxylate, irrespective of whether the translocated substrate is divalent or trivalent, rendering the process electrogenic. Involved in the regulation of citrate levels in the brain. This is Na(+)/citrate cotransporter (Slc13a5) from Mus musculus (Mouse).